Here is a 162-residue protein sequence, read N- to C-terminus: Caveolin-2 (162 aa).

The Cytoplasmic portion of the chain corresponds to 1 to 86 (MGLETEKADV…FEISKYVLYK (86 aa)). Tyr-19 bears the Phosphotyrosine; by SRC mark. Phosphoserine occurs at positions 20 and 23. The segment at residues 87–107 (FLTVFLAIPLAFAAGVLFAVL) is an intramembrane region (helical). Residues 108 to 162 (SCLHIWILMPFVKTCLMVLPSVQTIWRSVTDVVIAPLCASIGRSFSSVGLQLSHD) are Cytoplasmic-facing.

Belongs to the caveolin family. As to quaternary structure, monomer or homodimer. Interacts with CAV1; the interaction forms a stable heterooligomeric complex that is required for targeting to lipid rafts and for caveolae formation. Tyrosine phosphorylated forms do not form heterooligomers with the Tyr-19-phosphorylated form existing as a monomer or dimer. Interacts (tyrosine phosphorylated form) with the SH2 domain-containing proteins, RASA1, NCK1 and SRC. Interacts (tyrosine phosphorylated form) with INSR. Interacts (Tyr-19 phosphorylated form) with MAPK1 (phosphorylated form); the interaction, promoted by insulin, leads to nuclear location and MAPK1 activation. Interacts with STAT3; the interaction is increased on insulin-induced tyrosine phosphorylation leading to STAT activation. Post-translationally, phosphorylated on serine and tyrosine residues. CAV1 promotes phosphorylation on Ser-23 which then targets the complex to the plasma membrane, lipid rafts and caveolae. Phosphorylation on Tyr-19 is required for insulin-induced phosphorylation of MAPK1 and DNA binding of STAT3. Tyrosine phosphorylation is induced by both EGF and insulin.

Its subcellular location is the nucleus. The protein localises to the cytoplasm. It localises to the golgi apparatus membrane. It is found in the cell membrane. The protein resides in the membrane. Its subcellular location is the caveola. Its function is as follows. May act as a scaffolding protein within caveolar membranes. Interacts directly with G-protein alpha subunits and can functionally regulate their activity. Acts as an accessory protein in conjunction with CAV1 in targeting to lipid rafts and driving caveolae formation. Positive regulator of cellular mitogenesis of the MAPK signaling pathway. Required for the insulin-stimulated nuclear translocation and activation of MAPK1 and STAT3, and the subsequent regulation of cell cycle progression. The chain is Caveolin-2 (CAV2) from Oryctolagus cuniculus (Rabbit).